A 126-amino-acid chain; its full sequence is Adrenocorticotropic hormone receptor (126 aa).

A helical transmembrane segment spans residues 1–25 (VLPEEIFFTISIVGVLENLIVLLAV). Residues 26–34 (FKNKNLQAP) are Cytoplasmic-facing. The chain crosses the membrane as a helical span at residues 35-55 (MYFFICSLAISDMLGSLYKIL). The Extracellular portion of the chain corresponds to 56 to 80 (ENILIILRNMGYLKPRGSFETTADD). A helical membrane pass occupies residues 81–102 (IIDSLFVLSLLGAIFSLSVIAA). The Cytoplasmic segment spans residues 103-123 (DRYITIFHALRYHSIVTMRRT). A helical transmembrane segment spans residues 124–126 (VVV).

It belongs to the G-protein coupled receptor 1 family. As to quaternary structure, interacts with MRAP; increasing ligand-sensitivity and generation of cAMP. Interacts with MRAP2; competing with MRAP for binding to MC2R and impairing the binding of corticotropin (ACTH).

Its subcellular location is the cell membrane. Receptor for corticotropin (ACTH). This receptor is mediated by G proteins (G(s)) which activate adenylate cyclase (cAMP). This chain is Adrenocorticotropic hormone receptor (MC2R), found in Papio hamadryas (Hamadryas baboon).